Here is a 1082-residue protein sequence, read N- to C-terminus: Importin-4 (1082 aa).

M1 carries the post-translational modification N-acetylmethionine. Residues 24 to 90 (ATEQLQTILR…KSLVLTALQK (67 aa)) enclose the Importin N-terminal domain. HEAT repeat units follow at residues 348 to 385 (KLCP…GAGD), 390 to 427 (RLLY…NLQP), 431 to 471 (SYSE…NLGP), 475 to 513 (PYLP…AAQD), 896 to 933 (QFVS…HGGC), and 937 to 975 (DHFP…ASPV).

Belongs to the importin beta family. As to quaternary structure, found in a cytosolic complex with ASF1 (ASF1A or ASF1B) and histones H3 and H4.

Its subcellular location is the cytoplasm. It is found in the nucleus. Functionally, nuclear transport receptor that mediates nuclear import of proteins, such as histones, RPS3A, TNP2 and VDR. Serves as receptor for nuclear localization signals (NLS) in cargo substrates. Is thought to mediate docking of the importin/substrate complex to the nuclear pore complex (NPC) through binding to nucleoporin and the complex is subsequently translocated through the pore by an energy requiring, Ran-dependent mechanism. At the nucleoplasmic side of the NPC, Ran binds to the importin, the importin/substrate complex dissociates and importin is re-exported from the nucleus to the cytoplasm where GTP hydrolysis releases Ran. The directionality of nuclear import is thought to be conferred by an asymmetric distribution of the GTP- and GDP-bound forms of Ran between the cytoplasm and nucleus. Mediates the nuclear import of the histone H3-H4 dimer when in complex with ASF1 (ASF1A or ASF1B). Mediates the ligand-independent nuclear import of vitamin D receptor (VDR). This is Importin-4 (Ipo4) from Mus musculus (Mouse).